Reading from the N-terminus, the 398-residue chain is Succinyl-diaminopimelate desuccinylase (398 aa).

Residue H68 participates in Zn(2+) binding. The active site involves D70. D101 is a Zn(2+) binding site. Residue E135 is the Proton acceptor of the active site. Zn(2+)-binding residues include E136, E164, and H349.

The protein belongs to the peptidase M20A family. DapE subfamily. As to quaternary structure, homodimer. The cofactor is Zn(2+). Requires Co(2+) as cofactor.

The enzyme catalyses N-succinyl-(2S,6S)-2,6-diaminopimelate + H2O = (2S,6S)-2,6-diaminopimelate + succinate. The protein operates within amino-acid biosynthesis; L-lysine biosynthesis via DAP pathway; LL-2,6-diaminopimelate from (S)-tetrahydrodipicolinate (succinylase route): step 3/3. In terms of biological role, catalyzes the hydrolysis of N-succinyl-L,L-diaminopimelic acid (SDAP), forming succinate and LL-2,6-diaminopimelate (DAP), an intermediate involved in the bacterial biosynthesis of lysine and meso-diaminopimelic acid, an essential component of bacterial cell walls. The chain is Succinyl-diaminopimelate desuccinylase from Wolbachia pipientis subsp. Culex pipiens (strain wPip).